We begin with the raw amino-acid sequence, 503 residues long: Glycerol kinase (503 aa).

Thr-12 contributes to the ADP binding site. Residues Thr-12, Thr-13, and Ser-14 each contribute to the ATP site. Position 12 (Thr-12) interacts with sn-glycerol 3-phosphate. Arg-16 provides a ligand contact to ADP. Sn-glycerol 3-phosphate contacts are provided by Arg-82, Glu-83, Tyr-134, and Asp-243. Positions 82, 83, 134, 243, and 244 each coordinate glycerol. Thr-265 and Gly-308 together coordinate ADP. The ATP site is built by Thr-265, Gly-308, Gln-312, and Gly-412. Gly-412 contacts ADP.

This sequence belongs to the FGGY kinase family.

It carries out the reaction glycerol + ATP = sn-glycerol 3-phosphate + ADP + H(+). It participates in polyol metabolism; glycerol degradation via glycerol kinase pathway; sn-glycerol 3-phosphate from glycerol: step 1/1. Inhibited by fructose 1,6-bisphosphate (FBP). Functionally, key enzyme in the regulation of glycerol uptake and metabolism. Catalyzes the phosphorylation of glycerol to yield sn-glycerol 3-phosphate. The chain is Glycerol kinase from Nitrobacter hamburgensis (strain DSM 10229 / NCIMB 13809 / X14).